We begin with the raw amino-acid sequence, 291 residues long: 4-hydroxy-tetrahydrodipicolinate synthase (291 aa).

Residue Thr44 participates in pyruvate binding. Residue Tyr132 is the Proton donor/acceptor of the active site. The active-site Schiff-base intermediate with substrate is the Lys160. Residue Ile202 coordinates pyruvate.

The protein belongs to the DapA family. In terms of assembly, homotetramer; dimer of dimers.

Its subcellular location is the cytoplasm. The enzyme catalyses L-aspartate 4-semialdehyde + pyruvate = (2S,4S)-4-hydroxy-2,3,4,5-tetrahydrodipicolinate + H2O + H(+). Its pathway is amino-acid biosynthesis; L-lysine biosynthesis via DAP pathway; (S)-tetrahydrodipicolinate from L-aspartate: step 3/4. In terms of biological role, catalyzes the condensation of (S)-aspartate-beta-semialdehyde [(S)-ASA] and pyruvate to 4-hydroxy-tetrahydrodipicolinate (HTPA). The chain is 4-hydroxy-tetrahydrodipicolinate synthase from Syntrophobacter fumaroxidans (strain DSM 10017 / MPOB).